Here is a 140-residue protein sequence, read N- to C-terminus: Cytochrome c-type biogenesis protein CcmE (140 aa).

The Cytoplasmic portion of the chain corresponds to 1-7 (MTKRQNR). A helical; Signal-anchor for type II membrane protein membrane pass occupies residues 8–28 (MVLVALLVIGVSLAGYLGLKA). Residues 29 to 140 (FNENLLYFLS…DALEKAKNKQ (112 aa)) are Periplasmic-facing. Residues histidine 120 and tyrosine 124 each coordinate heme.

The protein belongs to the CcmE/CycJ family.

The protein resides in the cell inner membrane. Its function is as follows. Heme chaperone required for the biogenesis of c-type cytochromes. Transiently binds heme delivered by CcmC and transfers the heme to apo-cytochromes in a process facilitated by CcmF and CcmH. The chain is Cytochrome c-type biogenesis protein CcmE from Vesicomyosocius okutanii subsp. Calyptogena okutanii (strain HA).